The following is a 76-amino-acid chain: cAMP-dependent protein kinase inhibitor alpha (76 aa).

Thr2 is subject to N-acetylthreonine. A disordered region spans residues 49 to 76 (KTEGEEDAQRNSTEQSGEAQGEAAKSES).

It belongs to the PKI family.

Extremely potent competitive inhibitor of cAMP-dependent protein kinase activity, this protein interacts with the catalytic subunit of the enzyme after the cAMP-induced dissociation of its regulatory chains. The polypeptide is cAMP-dependent protein kinase inhibitor alpha (PKIA) (Bos taurus (Bovine)).